Consider the following 134-residue polypeptide: Small ribosomal subunit protein uS11 (134 aa).

This sequence belongs to the universal ribosomal protein uS11 family. As to quaternary structure, part of the 30S ribosomal subunit. Interacts with proteins S7 and S18. Binds to IF-3.

Its function is as follows. Located on the platform of the 30S subunit, it bridges several disparate RNA helices of the 16S rRNA. Forms part of the Shine-Dalgarno cleft in the 70S ribosome. This chain is Small ribosomal subunit protein uS11, found in Frankia casuarinae (strain DSM 45818 / CECT 9043 / HFP020203 / CcI3).